Consider the following 321-residue polypeptide: Glucokinase (321 aa).

ATP is bound at residue 8 to 13; sequence GDVGGT.

Belongs to the bacterial glucokinase family.

It is found in the cytoplasm. It carries out the reaction D-glucose + ATP = D-glucose 6-phosphate + ADP + H(+). In Salmonella heidelberg (strain SL476), this protein is Glucokinase.